Consider the following 156-residue polypeptide: Small ribosomal subunit protein uS7 (156 aa).

Belongs to the universal ribosomal protein uS7 family. As to quaternary structure, part of the 30S ribosomal subunit. Contacts proteins S9 and S11.

One of the primary rRNA binding proteins, it binds directly to 16S rRNA where it nucleates assembly of the head domain of the 30S subunit. Is located at the subunit interface close to the decoding center, probably blocks exit of the E-site tRNA. The sequence is that of Small ribosomal subunit protein uS7 from Trichlorobacter lovleyi (strain ATCC BAA-1151 / DSM 17278 / SZ) (Geobacter lovleyi).